We begin with the raw amino-acid sequence, 377 residues long: Tryptophan 2,3-dioxygenase (377 aa).

Substrate contacts are provided by residues 57–61 (FIITH) and Arg128. Heme is bound at residue His313. Thr328 is a substrate binding site.

This sequence belongs to the tryptophan 2,3-dioxygenase family. In terms of assembly, homotetramer. Dimer of dimers. It depends on heme as a cofactor.

The catalysed reaction is L-tryptophan + O2 = N-formyl-L-kynurenine. It functions in the pathway amino-acid degradation; L-tryptophan degradation via kynurenine pathway; L-kynurenine from L-tryptophan: step 1/2. It participates in pigment biosynthesis; ommochrome biosynthesis. Heme-dependent dioxygenase that catalyzes the oxidative cleavage of the L-tryptophan (L-Trp) pyrrole ring and converts L-tryptophan to N-formyl-L-kynurenine. Catalyzes the oxidative cleavage of the indole moiety. This chain is Tryptophan 2,3-dioxygenase, found in Drosophila grimshawi (Hawaiian fruit fly).